A 153-amino-acid chain; its full sequence is 3-hydroxyacyl-[acyl-carrier-protein] dehydratase FabZ (153 aa).

The active site involves His-47.

It belongs to the thioester dehydratase family. FabZ subfamily.

The protein resides in the cytoplasm. It carries out the reaction a (3R)-hydroxyacyl-[ACP] = a (2E)-enoyl-[ACP] + H2O. In terms of biological role, involved in unsaturated fatty acids biosynthesis. Catalyzes the dehydration of short chain beta-hydroxyacyl-ACPs and long chain saturated and unsaturated beta-hydroxyacyl-ACPs. The sequence is that of 3-hydroxyacyl-[acyl-carrier-protein] dehydratase FabZ from Myxococcus xanthus (strain DK1622).